Consider the following 154-residue polypeptide: Large ribosomal subunit protein uL13 (154 aa).

It belongs to the universal ribosomal protein uL13 family. As to quaternary structure, part of the 50S ribosomal subunit.

Its function is as follows. This protein is one of the early assembly proteins of the 50S ribosomal subunit, although it is not seen to bind rRNA by itself. It is important during the early stages of 50S assembly. The polypeptide is Large ribosomal subunit protein uL13 (Agrobacterium fabrum (strain C58 / ATCC 33970) (Agrobacterium tumefaciens (strain C58))).